We begin with the raw amino-acid sequence, 351 residues long: Alternative oxidase, mitochondrial (351 aa).

A helical transmembrane segment spans residues 147–167; sequence LTRFIFLESVAGVPGMVGGML. Fe cation contacts are provided by Glu-154, Glu-193, and His-196. The chain crosses the membrane as a helical span at residues 212–232; it reads LMVLGAQGVFFNGFFLSYLMS. The Fe cation site is built by Glu-244, Glu-245, Glu-299, and His-302. The tract at residues 322-351 is disordered; that stretch reads AAKYKDPTKAHPNKGIADLKPTGWEREEVI.

It belongs to the alternative oxidase family. The cofactor is Fe cation.

It is found in the mitochondrion inner membrane. Catalyzes cyanide-resistant oxygen consumption. May increase respiration when the cytochrome respiratory pathway is restricted, or in response to low temperatures. The sequence is that of Alternative oxidase, mitochondrial (aox1) from Aspergillus niger.